Here is a 188-residue protein sequence, read N- to C-terminus: dCTP deaminase (188 aa).

Residues 111–116 (KSTYAR), 135–137 (TLE), Gln-156, Tyr-170, Lys-179, and Gln-180 each bind dCTP. Glu-137 (proton donor/acceptor) is an active-site residue.

The protein belongs to the dCTP deaminase family. In terms of assembly, homotrimer.

It carries out the reaction dCTP + H2O + H(+) = dUTP + NH4(+). It participates in pyrimidine metabolism; dUMP biosynthesis; dUMP from dCTP (dUTP route): step 1/2. In terms of biological role, catalyzes the deamination of dCTP to dUTP. The protein is dCTP deaminase of Rickettsia bellii (strain OSU 85-389).